Here is a 187-residue protein sequence, read N- to C-terminus: Putative acyl-coenzyme A oxidase At3g06690 (187 aa).

The disordered stretch occupies residues 1-21 (MTKEPIYSPRMLHRDPDSPRP).

Belongs to the acyl-CoA oxidase family.

The enzyme catalyses a 2,3-saturated acyl-CoA + O2 = a (2E)-enoyl-CoA + H2O2. The polypeptide is Putative acyl-coenzyme A oxidase At3g06690 (Arabidopsis thaliana (Mouse-ear cress)).